We begin with the raw amino-acid sequence, 317 residues long: Acetyl-coenzyme A carboxylase carboxyl transferase subunit alpha (317 aa).

A CoA carboxyltransferase C-terminal domain is found at 39–293 (RLESRVNDAM…GDVIAKALAD (255 aa)).

Belongs to the AccA family. Acetyl-CoA carboxylase is a heterohexamer composed of biotin carboxyl carrier protein (AccB), biotin carboxylase (AccC) and two subunits each of ACCase subunit alpha (AccA) and ACCase subunit beta (AccD).

It is found in the cytoplasm. It catalyses the reaction N(6)-carboxybiotinyl-L-lysyl-[protein] + acetyl-CoA = N(6)-biotinyl-L-lysyl-[protein] + malonyl-CoA. It participates in lipid metabolism; malonyl-CoA biosynthesis; malonyl-CoA from acetyl-CoA: step 1/1. Its function is as follows. Component of the acetyl coenzyme A carboxylase (ACC) complex. First, biotin carboxylase catalyzes the carboxylation of biotin on its carrier protein (BCCP) and then the CO(2) group is transferred by the carboxyltransferase to acetyl-CoA to form malonyl-CoA. This chain is Acetyl-coenzyme A carboxylase carboxyl transferase subunit alpha, found in Agrobacterium fabrum (strain C58 / ATCC 33970) (Agrobacterium tumefaciens (strain C58)).